A 149-amino-acid chain; its full sequence is Cytochrome c-556 (149 aa).

The N-terminal stretch at 1–20 is a signal peptide; that stretch reads MLRTVIVAGALVLTASAVMA. Heme c is bound by residues methionine 32, cysteine 137, cysteine 140, and histidine 141.

Monomer. Binds 1 heme c group covalently per subunit.

In terms of biological role, low-spin monoheme cytochrome c. The polypeptide is Cytochrome c-556 (Rhodopseudomonas palustris (strain ATCC BAA-98 / CGA009)).